The sequence spans 351 residues: S-adenosylmethionine:tRNA ribosyltransferase-isomerase (351 aa).

It belongs to the QueA family. Monomer.

Its subcellular location is the cytoplasm. It catalyses the reaction 7-aminomethyl-7-carbaguanosine(34) in tRNA + S-adenosyl-L-methionine = epoxyqueuosine(34) in tRNA + adenine + L-methionine + 2 H(+). It functions in the pathway tRNA modification; tRNA-queuosine biosynthesis. In terms of biological role, transfers and isomerizes the ribose moiety from AdoMet to the 7-aminomethyl group of 7-deazaguanine (preQ1-tRNA) to give epoxyqueuosine (oQ-tRNA). This chain is S-adenosylmethionine:tRNA ribosyltransferase-isomerase, found in Hahella chejuensis (strain KCTC 2396).